The sequence spans 289 residues: Mas-related G-protein coupled receptor member G (289 aa).

The Extracellular portion of the chain corresponds to 1–13 (MFSIFNIWGTFNK). A helical membrane pass occupies residues 14–34 (VLFFLSLTVSLAGLVGNALLL). Topologically, residues 35–52 (WHLGLHIKKGPFNTYLLH) are cytoplasmic. The helical transmembrane segment at 53–73 (LAAADFLFLSCQVGFSIATIV) threads the bilayer. At 74–78 (SGHED) the chain is on the extracellular side. The chain crosses the membrane as a helical span at residues 79–99 (TLYFPVTFLWFAVGLWLLAAF). The Cytoplasmic segment spans residues 100 to 120 (SVDCCLAYMFPSFCSPNRRPR). The helical transmembrane segment at 121 to 141 (FTSVVLCLVIWALTMPAVLLP) threads the bilayer. Residues 142-164 (ANACGLLKNGMSLLVCLKYHWTS) are Extracellular-facing. The helical transmembrane segment at 165–185 (VTWLAVLSGMACGASKFLLIF) threads the bilayer. The Cytoplasmic segment spans residues 186–199 (GNCCSSQPPPKFCK). The chain crosses the membrane as a helical span at residues 200 to 220 (LAQCSGILLFFCRLPLVVYWC). Topologically, residues 221–222 (LR) are extracellular. The chain crosses the membrane as a helical span at residues 223-243 (PVLKFLLPFFFPLATLLACID). Residues 244–289 (SSAKPLLYYMKGRQLRKDPLQVALNRALGEESQSGLGGLSLPMHQV) lie on the Cytoplasmic side of the membrane.

The protein belongs to the G-protein coupled receptor 1 family. Mas subfamily.

The protein resides in the cell membrane. Orphan receptor. May regulate nociceptor function and/or development, including the sensation or modulation of pain. The protein is Mas-related G-protein coupled receptor member G (Mrgprg) of Mus musculus (Mouse).